The sequence spans 618 residues: ELMO domain-containing protein C (618 aa).

Positions 1-72 form a coiled coil; sequence MERYRIRRER…EELRLQGDRF (72 aa). Disordered regions lie at residues 153-175 and 245-276; these read NFDN…KPSL and TTTT…STTV. Low complexity-rich tracts occupy residues 156–171 and 245–275; these read NNNN…NNGN and TTTT…SSTT. In terms of domain architecture, ELMO spans 382–545; sequence DHEEYLKHLW…KLKSQLNEIS (164 aa). 2 stretches are compositionally biased toward low complexity: residues 574 to 592 and 602 to 618; these read QQQQ…PSSP and TTTS…TQNN. The disordered stretch occupies residues 574-618; that stretch reads QQQQQLQQQQQSLPLPSSPRSFLNNYQQTTTSSTSISPSKNTQNN.

In Dictyostelium discoideum (Social amoeba), this protein is ELMO domain-containing protein C (elmoC).